Consider the following 326-residue polypeptide: Vitamin B12 import system permease protein BtuC (326 aa).

Helical transmembrane passes span 15-35, 61-81, 88-108, 112-132, 146-166, 184-204, 240-260, 274-294, and 302-322; these read WLLCLSVLMLLALLLSLCAGE, LAVLLVGAALAISGAVMQALF, PGLLGVSNGAGVGLIAAVLLG, LPNWALGLCAIAGALIITLIL, LLAGVALGIICSALMTWAIYF, GGVDWRQSWLMLALIPVLLWI, GWMVGVSVALAGAIGFIGLVI, VLLPGCALAGASAVLLADIVA, and ELPIGVVTATLGAPVFIWLLL.

It belongs to the binding-protein-dependent transport system permease family. FecCD subfamily. In terms of assembly, the complex is composed of two ATP-binding proteins (BtuD), two transmembrane proteins (BtuC) and a solute-binding protein (BtuF).

The protein localises to the cell inner membrane. Part of the ABC transporter complex BtuCDF involved in vitamin B12 import. Involved in the translocation of the substrate across the membrane. The chain is Vitamin B12 import system permease protein BtuC from Shigella sonnei (strain Ss046).